Here is a 578-residue protein sequence, read N- to C-terminus: Hemolysin 4 (578 aa).

The interval lysine 289–glutamate 322 is disordered. The Ricin B-type lectin domain maps to arginine 448–leucine 539.

Belongs to the HlyA hemolysin family.

Its function is as follows. Bacterial hemolysins are exotoxins that attack blood cell membranes and cause cell rupture by mechanisms not clearly defined. The protein is Hemolysin 4 (ash4) of Aeromonas salmonicida.